The sequence spans 326 residues: D-alanine--D-alanine ligase (326 aa).

The 200-residue stretch at 114-313 (KRVWLQHGLR…YAELCVSIVS (200 aa)) folds into the ATP-grasp domain. 140–195 (PDRLGLPLILKPPHEGSTVGITKVAGYSDMKEGYAQAAKFDDEVLAEQFIAGRELT) contributes to the ATP binding site. Residues Asp-267, Glu-280, and Asn-282 each coordinate Mg(2+).

The protein belongs to the D-alanine--D-alanine ligase family. Mg(2+) serves as cofactor. Mn(2+) is required as a cofactor.

It is found in the cytoplasm. The catalysed reaction is 2 D-alanine + ATP = D-alanyl-D-alanine + ADP + phosphate + H(+). The protein operates within cell wall biogenesis; peptidoglycan biosynthesis. Its function is as follows. Cell wall formation. This chain is D-alanine--D-alanine ligase, found in Bordetella petrii (strain ATCC BAA-461 / DSM 12804 / CCUG 43448).